The chain runs to 268 residues: tRNA pseudouridine synthase A (268 aa).

D52 acts as the Nucleophile in catalysis. Y110 is a binding site for substrate.

It belongs to the tRNA pseudouridine synthase TruA family. Homodimer.

The catalysed reaction is uridine(38/39/40) in tRNA = pseudouridine(38/39/40) in tRNA. Functionally, formation of pseudouridine at positions 38, 39 and 40 in the anticodon stem and loop of transfer RNAs. The sequence is that of tRNA pseudouridine synthase A from Prochlorococcus marinus (strain MIT 9301).